The sequence spans 419 residues: Methylthioribose kinase (419 aa).

Residues N49 and K64 each coordinate ATP. D239 is a substrate binding site. Residue 256–258 (DPE) coordinates ATP. R365 serves as a coordination point for substrate.

This sequence belongs to the methylthioribose kinase family. In terms of assembly, homodimer.

It carries out the reaction 5-(methylsulfanyl)-D-ribose + ATP = 5-(methylsulfanyl)-alpha-D-ribose 1-phosphate + ADP + H(+). It catalyses the reaction 5-deoxy-D-ribose + ATP = 5-deoxy-alpha-D-ribose 1-phosphate + ADP + H(+). Its pathway is amino-acid biosynthesis; L-methionine biosynthesis via salvage pathway; S-methyl-5-thio-alpha-D-ribose 1-phosphate from S-methyl-5'-thioadenosine (hydrolase route): step 2/2. Catalyzes the phosphorylation of methylthioribose into methylthioribose-1-phosphate. Also catalyzes the phosphorylation of 5-deoxyribose to 5-deoxyribose-1-phosphate. Part of a bifunctional DHAP-shunt salvage pathway for SAM by-products. The sequence is that of Methylthioribose kinase from Escherichia coli O45:K1 (strain S88 / ExPEC).